The following is a 147-amino-acid chain: 3-dehydroquinate dehydratase (147 aa).

The active-site Proton acceptor is the Tyr-24. Residues Asn-75, His-81, and Asp-88 each coordinate substrate. The active-site Proton donor is the His-101. Substrate contacts are provided by residues 102-103 (IS) and Arg-112.

This sequence belongs to the type-II 3-dehydroquinase family. Homododecamer.

The catalysed reaction is 3-dehydroquinate = 3-dehydroshikimate + H2O. It functions in the pathway metabolic intermediate biosynthesis; chorismate biosynthesis; chorismate from D-erythrose 4-phosphate and phosphoenolpyruvate: step 3/7. Catalyzes a trans-dehydration via an enolate intermediate. The sequence is that of 3-dehydroquinate dehydratase from Cereibacter sphaeroides (strain ATCC 17029 / ATH 2.4.9) (Rhodobacter sphaeroides).